Consider the following 257-residue polypeptide: Zinc transporter ZupT (257 aa).

The next 8 membrane-spanning stretches (helical) occupy residues Leu5–Gly25, Leu32–Met52, Gly61–Leu81, Ala109–Val129, Leu137–Ala157, Ile171–Ile191, Met195–Leu215, and Gly236–Ile256. The Fe(2+) site is built by Asn120 and Glu123. 2 residues coordinate Zn(2+): Glu123 and His148. Residues Asn149, Glu152, and Glu181 each contribute to the Fe(2+) site. Zn(2+) is bound at residue Glu152.

It belongs to the ZIP transporter (TC 2.A.5) family. ZupT subfamily.

Its subcellular location is the cell inner membrane. It carries out the reaction Zn(2+)(in) = Zn(2+)(out). In terms of biological role, mediates zinc uptake. May also transport other divalent cations. This chain is Zinc transporter ZupT, found in Shigella flexneri serotype 5b (strain 8401).